The chain runs to 711 residues: Ecdysone-inducible protein E75 (711 aa).

Residues Thr-44–Phe-120 constitute a DNA-binding region (nuclear receptor). 2 NR C4-type zinc fingers span residues Cys-47–Cys-67 and Cys-84–Cys-108. The 248-residue stretch at Asp-153–Ala-400 folds into the NR LBD domain. Disordered regions lie at residues Ser-405–Thr-432, Leu-466–Val-530, Ala-559–Ala-602, and Asp-680–Ala-711. Composition is skewed to basic and acidic residues over residues Ser-511–Pro-521 and Met-560–Pro-572. The span at Arg-574–Pro-590 shows a compositional bias: pro residues. 2 stretches are compositionally biased toward low complexity: residues Ala-591–Ala-602 and Pro-682–Pro-692. A compositionally biased stretch (pro residues) spans Ser-693–Ala-711.

The protein belongs to the nuclear hormone receptor family. NR1 subfamily.

The protein localises to the nucleus. Its function is as follows. Orphan receptor possibly involved in the regulation of genes in the ecdysteroid cascade. This chain is Ecdysone-inducible protein E75 (E75), found in Galleria mellonella (Greater wax moth).